The following is a 285-amino-acid chain: Mediator of RNA polymerase II transcription subunit 4 (285 aa).

The segment covering 1–13 (MSTPGPVPSSTSV) has biased composition (low complexity). Residues 1-25 (MSTPGPVPSSTSVATLPFSAQDKTQ) form a disordered region. Residues 31–115 (ELQSVGIYQD…TREILETLNT (85 aa)) are a coiled coil. The disordered stretch occupies residues 206–285 (DNVNNDNNTS…DLDLFNPDEF (80 aa)). Basic and acidic residues-rich tracts occupy residues 216–250 (KIDE…RRGS) and 257–267 (GKEDSETKSEE). The segment covering 268 to 285 (NPDLELDLDLDLFNPDEF) has biased composition (acidic residues).

Belongs to the Mediator complex subunit 4 family. As to quaternary structure, component of the Mediator complex.

The protein localises to the nucleus. Component of the Mediator complex, a coactivator involved in the regulated transcription of nearly all RNA polymerase II-dependent genes. Mediator functions as a bridge to convey information from gene-specific regulatory proteins to the basal RNA polymerase II transcription machinery. Mediator is recruited to promoters by direct interactions with regulatory proteins and serves as a scaffold for the assembly of a functional preinitiation complex with RNA polymerase II and the general transcription factors. The chain is Mediator of RNA polymerase II transcription subunit 4 (MED4) from Kluyveromyces lactis (strain ATCC 8585 / CBS 2359 / DSM 70799 / NBRC 1267 / NRRL Y-1140 / WM37) (Yeast).